We begin with the raw amino-acid sequence, 498 residues long: MASFRGSIWYCIFVLSLIAVAISAAESEEEQSSVLTLDSTNFTDTISKHDFIVVEFYAPWCGHCKKLRPEYEKAASILKSHDIPVVLAKVDANEEANKELATQYDIKGFPTLKILRNGGKSIQEYKGPREADGIAEYLKKQSGPASVEIKSTEAANTFIGDKKIFIVGVFPKFSGEEYENYMSVADKLRSDYEFGHTLDAKHLPQGESSVTGPVVRLFKPFDELFVDFKDFNVDALEKFVEESSMPVVTVFNSDPSNHPFVIKFFNSPDAKAMLFMNFNGEAADSIKSKYQEVAHQFKGEGIILLLGDVEASQGAFQYFGLKEDQVPLIIIQTNDGQKYLKANLEPDHIAPWVKAYKEGKVQAYRKSEPIPEVNNEPVKVVVADTLQDIVFNSGKNVLLEFYAPWCGHCKQLAPILDEVAVSYKSDADIVIAKLDATANDIPSDTFDVRGYPTVYFRSASGKVEQYDGDRTKDDIISFIEKNRDKAAQQESANGKDEL.

Residues 1 to 23 form the signal peptide; that stretch reads MASFRGSIWYCIFVLSLIAVAIS. 2 Thioredoxin domains span residues 24–143 and 339–484; these read AAES…KQSG and YLKA…KNRD. N-linked (GlcNAc...) asparagine glycosylation is present at asparagine 41. Catalysis depends on nucleophile residues cysteine 61, cysteine 64, cysteine 406, and cysteine 409. Intrachain disulfides connect cysteine 61/cysteine 64 and cysteine 406/cysteine 409. Residues 495 to 498 carry the Prevents secretion from ER motif; it reads KDEL.

Belongs to the protein disulfide isomerase family.

It localises to the endoplasmic reticulum lumen. It catalyses the reaction Catalyzes the rearrangement of -S-S- bonds in proteins.. Its function is as follows. Participates in the folding of proteins containing disulfide bonds, may be involved in glycosylation, prolyl hydroxylation and triglyceride transfer. In Ricinus communis (Castor bean), this protein is Protein disulfide-isomerase.